The following is a 61-amino-acid chain: UPF0312 protein (61 aa).

Belongs to the UPF0312 family.

This Delftia acidovorans (Pseudomonas acidovorans) protein is UPF0312 protein.